The primary structure comprises 202 residues: MSIEVFNESGYDGVNEEALIDVAQFALMRMDIHPAADMTISIVDEPTIEDLHVRWLNLEGPTDVMSFPMDELTPGSGRPDADAPGPAMLGDIVLCPAFAERQAHRAGHGLGHELSLLTVHGILHLLGYDHVAPEEERRMFALQNDILADWYTDLEERGVSYGPKPTGPGAFPTAADREALDQDMIKSTVGGMLAEPTDRDKS.

Residues His120, His124, and His130 each contribute to the Zn(2+) site.

The protein belongs to the endoribonuclease YbeY family. The cofactor is Zn(2+).

Its subcellular location is the cytoplasm. Functionally, single strand-specific metallo-endoribonuclease involved in late-stage 70S ribosome quality control and in maturation of the 3' terminus of the 16S rRNA. The chain is Endoribonuclease YbeY from Corynebacterium kroppenstedtii (strain DSM 44385 / JCM 11950 / CIP 105744 / CCUG 35717).